The sequence spans 71 residues: Prokaryotic ubiquitin-like protein Pup (71 aa).

The tract at residues 1 to 30 is disordered; sequence MPSASGHHQIPAETQRHDDDQTQETAQGLS. Residues 23-56 are a coiled coil; it reads QETAQGLSAAAMLAQEQADDLDAILDDIETVLET. The tract at residues 27–65 is ARC ATPase binding; that stretch reads QGLSAAAMLAQEQADDLDAILDDIETVLETNAEEYVSSF. An Isoglutamyl lysine isopeptide (Glu-Lys) (interchain with K-? in acceptor proteins) cross-link involves residue glutamate 71.

It belongs to the prokaryotic ubiquitin-like protein family. As to quaternary structure, strongly interacts with the proteasome-associated ATPase ARC through a hydrophobic interface; the interacting region of Pup lies in its C-terminal half. There is one Pup binding site per ARC hexamer ring.

It functions in the pathway protein degradation; proteasomal Pup-dependent pathway. Functionally, protein modifier that is covalently attached to lysine residues of substrate proteins, thereby targeting them for proteasomal degradation. The tagging system is termed pupylation. This is Prokaryotic ubiquitin-like protein Pup from Bifidobacterium animalis subsp. lactis (strain AD011).